The following is a 119-amino-acid chain: uncharacterized protein (119 aa).

3 helical membrane passes run 28 to 48 (AWTTGIWLIALCYEIVSHLVF), 55 to 75 (IEVVHGWVYFVYVLTAFNLAI), and 80 to 100 (PIGKTVGVLLAGTVPLLGIIV).

To M.tuberculosis Rv1342c.

The protein resides in the cell membrane. This is an uncharacterized protein from Mycobacterium leprae (strain TN).